We begin with the raw amino-acid sequence, 232 residues long: Probable proteasome subunit alpha type-5 (232 aa).

The protein belongs to the peptidase T1A family. As to quaternary structure, the 26S proteasome consists of a 20S proteasome core and two 19S regulatory subunits. The 20S proteasome core is composed of 28 subunits that are arranged in four stacked rings, resulting in a barrel-shaped structure. The two end rings are each formed by seven alpha subunits, and the two central rings are each formed by seven beta subunits. The catalytic chamber with the active sites is on the inside of the barrel.

The protein resides in the cytoplasm. It localises to the nucleus. Its function is as follows. The proteasome degrades poly-ubiquitinated proteins in the cytoplasm and in the nucleus. It is essential for the regulated turnover of proteins and for the removal of misfolded proteins. The proteasome is a multicatalytic proteinase complex that is characterized by its ability to cleave peptides with Arg, Phe, Tyr, Leu, and Glu adjacent to the leaving group at neutral or slightly basic pH. It has an ATP-dependent proteolytic activity. In Encephalitozoon cuniculi (strain GB-M1) (Microsporidian parasite), this protein is Probable proteasome subunit alpha type-5 (PUP2).